Reading from the N-terminus, the 457-residue chain is MPSSATSTYLLSLKQVSLTASSPLLLQLKDRFFHQPKLLNMGFSTGKRKSRDEEEDRVSFFASEFPMDDLNDDVLERVLSWLPTSCFFRMSSVCKRWKSSQTSKSFKLACSQIPTRDPWFFMIDNDSNSSSFVFDSTENSWKNLNRRDFLHHHRQDFIPVASSGGLLCYRCSISGDFLLRNPLTGSSRDIPSQDNNNNKPLQAVAMTTTTVTPSSYTLVTISGEIPNLSFKIYESNADSWSKDQELESVKNNDSSLHDDYDTDSGTVYFLSKQGNVVVASNNLQRSPSKQYSSVITVTDEAEIVYFLSSYGTIVACDLTKRCFTELPKLLPPFLEYSIDLVECEGTMYVILLSEFFESASLRIWRLDNNREWVQVGMLPPALSHELYGKKGDINCVGGAGNKILVCFNASPPEVYCRYFVYDLVAEEWNELPKCFKDGEAVDFVSALSFQPRIEATV.

The F-box domain occupies E64–C110.

This is F-box only protein 13 (FBX13) from Arabidopsis thaliana (Mouse-ear cress).